Reading from the N-terminus, the 124-residue chain is Ribonuclease pancreatic A (124 aa).

The disordered stretch occupies residues 1–24 (AESSAMKFERQHVDSGGSSSSNAN). Lys7 and Arg10 together coordinate substrate. His12 acts as the Proton acceptor in catalysis. Cystine bridges form between Cys26–Cys84, Cys40–Cys95, Cys58–Cys110, and Cys65–Cys72. Substrate is bound by residues 41 to 45 (KPVNT), Lys66, and Arg85. The active-site Proton donor is the His119.

The protein belongs to the pancreatic ribonuclease family. Pancreas.

Its subcellular location is the secreted. It catalyses the reaction an [RNA] containing cytidine + H2O = an [RNA]-3'-cytidine-3'-phosphate + a 5'-hydroxy-ribonucleotide-3'-[RNA].. It carries out the reaction an [RNA] containing uridine + H2O = an [RNA]-3'-uridine-3'-phosphate + a 5'-hydroxy-ribonucleotide-3'-[RNA].. The protein is Ribonuclease pancreatic A of Cavia porcellus (Guinea pig).